The primary structure comprises 201 residues: Aminoglycoside N(6')-acetyltransferase type 1 (201 aa).

The 168-residue stretch at 25-192 (VTLRLMTEHD…PAVYMVQTRQ (168 aa)) folds into the N-acetyltransferase domain. Substrate is bound by residues tryptophan 51 and aspartate 154. Asparagine 159 is a binding site for acetyl-CoA.

As to quaternary structure, homodimer.

It carries out the reaction kanamycin B + acetyl-CoA = N(6')-acetylkanamycin B + CoA + H(+). Its function is as follows. Catalyzes the transfer of an acetyl group from acetyl-CoA to the 6'-amino group of aminoglycoside molecules conferring resistance to antibiotics containing the purpurosamine ring including amikacin and kanamycin. In Serratia marcescens, this protein is Aminoglycoside N(6')-acetyltransferase type 1 (aacA4).